The primary structure comprises 501 residues: Cytochrome P450 71B3 (501 aa).

Residues 2-22 form a helical membrane-spanning segment; sequence SILLYFFFLPVILSLIFMKKF. Residue Cys445 coordinates heme.

The protein belongs to the cytochrome P450 family. Requires heme as cofactor.

It is found in the membrane. The polypeptide is Cytochrome P450 71B3 (CYP71B3) (Arabidopsis thaliana (Mouse-ear cress)).